The chain runs to 153 residues: UPF0266 membrane protein SG1324 (153 aa).

The next 3 helical transmembrane spans lie at 6-26 (IGLV…EFIV), 46-66 (LDGL…ITTD), and 68-88 (KVMT…LAYI).

This sequence belongs to the UPF0266 family.

The protein resides in the cell inner membrane. In Sodalis glossinidius (strain morsitans), this protein is UPF0266 membrane protein SG1324.